A 364-amino-acid polypeptide reads, in one-letter code: Lipoyl synthase, mitochondrial (364 aa).

A disordered region spans residues 34–53 (PNFQDFIQNSDNSKDDFENY). [4Fe-4S] cluster contacts are provided by cysteine 99, cysteine 104, cysteine 110, cysteine 130, cysteine 134, cysteine 137, and serine 345. The 220-residue stretch at 115–334 (EHGTQTATIM…EQRGNELGFL (220 aa)) folds into the Radical SAM core domain.

This sequence belongs to the radical SAM superfamily. Lipoyl synthase family. Requires [4Fe-4S] cluster as cofactor.

The protein resides in the mitochondrion. The catalysed reaction is [[Fe-S] cluster scaffold protein carrying a second [4Fe-4S](2+) cluster] + N(6)-octanoyl-L-lysyl-[protein] + 2 oxidized [2Fe-2S]-[ferredoxin] + 2 S-adenosyl-L-methionine + 4 H(+) = [[Fe-S] cluster scaffold protein] + N(6)-[(R)-dihydrolipoyl]-L-lysyl-[protein] + 4 Fe(3+) + 2 hydrogen sulfide + 2 5'-deoxyadenosine + 2 L-methionine + 2 reduced [2Fe-2S]-[ferredoxin]. The protein operates within protein modification; protein lipoylation via endogenous pathway; protein N(6)-(lipoyl)lysine from octanoyl-[acyl-carrier-protein]: step 2/2. Its function is as follows. Catalyzes the radical-mediated insertion of two sulfur atoms into the C-6 and C-8 positions of the octanoyl moiety bound to the lipoyl domains of lipoate-dependent enzymes, thereby converting the octanoylated domains into lipoylated derivatives. This Drosophila grimshawi (Hawaiian fruit fly) protein is Lipoyl synthase, mitochondrial.